The sequence spans 454 residues: Ribosomal protein uS12 methylthiotransferase RimO (454 aa).

The region spanning 14-125 (SKVAFSHVGC…IAKVLDRVEK (112 aa)) is the MTTase N-terminal domain. [4Fe-4S] cluster is bound by residues Cys23, Cys59, Cys88, Cys163, Cys167, and Cys170. One can recognise a Radical SAM core domain in the interval 149 to 378 (DKNKFVAYLR…ISVQQNISKD (230 aa)). One can recognise a TRAM domain in the interval 381–452 (QSYVGSKMKI…EYDLYGETIK (72 aa)).

The protein belongs to the methylthiotransferase family. RimO subfamily. It depends on [4Fe-4S] cluster as a cofactor.

The protein resides in the cytoplasm. The enzyme catalyses L-aspartate(89)-[ribosomal protein uS12]-hydrogen + (sulfur carrier)-SH + AH2 + 2 S-adenosyl-L-methionine = 3-methylsulfanyl-L-aspartate(89)-[ribosomal protein uS12]-hydrogen + (sulfur carrier)-H + 5'-deoxyadenosine + L-methionine + A + S-adenosyl-L-homocysteine + 2 H(+). Its function is as follows. Catalyzes the methylthiolation of an aspartic acid residue of ribosomal protein uS12. This chain is Ribosomal protein uS12 methylthiotransferase RimO, found in Prochlorococcus marinus (strain MIT 9312).